Consider the following 385-residue polypeptide: cAMP-dependent protein kinase, catalytic subunit-like (385 aa).

The 255-residue stretch at L63–F317 folds into the Protein kinase domain. ATP-binding positions include I69–V77 and K92. The active-site Proton acceptor is the D186. An AGC-kinase C-terminal domain is found at E318–W385.

It belongs to the protein kinase superfamily. Ser/Thr protein kinase family. cAMP subfamily.

The enzyme catalyses L-seryl-[protein] + ATP = O-phospho-L-seryl-[protein] + ADP + H(+). The catalysed reaction is L-threonyl-[protein] + ATP = O-phospho-L-threonyl-[protein] + ADP + H(+). This is cAMP-dependent protein kinase, catalytic subunit-like from Caenorhabditis briggsae.